The following is a 403-amino-acid chain: S-adenosylmethionine synthase (403 aa).

ATP is bound at residue His-17. Asp-19 contacts Mg(2+). A K(+)-binding site is contributed by Glu-45. L-methionine is bound by residues Glu-58 and Gln-104. Positions 104–114 are flexible loop; that stretch reads QSPDIAQGVDT. ATP is bound by residues 179 to 181, 250 to 251, Asp-259, 265 to 266, Ala-282, and Lys-286; these read DGK, KF, and RK. Asp-259 lines the L-methionine pocket. Position 290 (Lys-290) interacts with L-methionine.

This sequence belongs to the AdoMet synthase family. Homotetramer; dimer of dimers. Requires Mg(2+) as cofactor. K(+) serves as cofactor.

The protein resides in the cytoplasm. The enzyme catalyses L-methionine + ATP + H2O = S-adenosyl-L-methionine + phosphate + diphosphate. Its pathway is amino-acid biosynthesis; S-adenosyl-L-methionine biosynthesis; S-adenosyl-L-methionine from L-methionine: step 1/1. In terms of biological role, catalyzes the formation of S-adenosylmethionine (AdoMet) from methionine and ATP. The overall synthetic reaction is composed of two sequential steps, AdoMet formation and the subsequent tripolyphosphate hydrolysis which occurs prior to release of AdoMet from the enzyme. This is S-adenosylmethionine synthase from Mycobacterium avium (strain 104).